We begin with the raw amino-acid sequence, 353 residues long: Deoxyribonuclease-2-alpha (353 aa).

The N-terminal stretch at 1 to 19 (MATLRSLLLAALLWVPAEA) is a signal peptide. Cysteine 22 and cysteine 161 form a disulfide bridge. Residues asparagine 71, asparagine 88, asparagine 214, and asparagine 268 are each glycosylated (N-linked (GlcNAc...) asparagine). 2 disulfide bridges follow: cysteine 269–cysteine 349 and cysteine 310–cysteine 329. Residue histidine 297 is part of the active site.

Belongs to the DNase II family. Highly expressed in fetal liver macrophages.

The protein localises to the lysosome. It carries out the reaction Endonucleolytic cleavage to nucleoside 3'-phosphates and 3'-phosphooligonucleotide end-products.. Its function is as follows. Hydrolyzes DNA under acidic conditions with a preference for double-stranded DNA. Plays a major role in the clearance of nucleic acids generated through apoptosis, hence preventing autoinflammation. Necessary for proper fetal development and for definitive erythropoiesis in fetal liver and bone marrow, where it degrades nuclear DNA expelled from erythroid precursor cells. The chain is Deoxyribonuclease-2-alpha (Dnase2) from Mus musculus (Mouse).